Consider the following 97-residue polypeptide: Pollen allergen Lol p 3 (97 aa).

An Expansin-like CBD domain is found at Lys-14–Pro-94.

The protein belongs to the expansin family. Expansin B subfamily.

It localises to the secreted. The protein is Pollen allergen Lol p 3 of Lolium perenne (Perennial ryegrass).